Here is a 546-residue protein sequence, read N- to C-terminus: Chaperonin GroEL 4 (546 aa).

Residues 30–33 (TLGP), Lys-51, 87–91 (DGTTT), Gly-415, and Asp-496 each bind ATP.

It belongs to the chaperonin (HSP60) family. In terms of assembly, forms a cylinder of 14 subunits composed of two heptameric rings stacked back-to-back. Interacts with the co-chaperonin GroES.

The protein resides in the cytoplasm. It carries out the reaction ATP + H2O + a folded polypeptide = ADP + phosphate + an unfolded polypeptide.. In terms of biological role, together with its co-chaperonin GroES, plays an essential role in assisting protein folding. The GroEL-GroES system forms a nano-cage that allows encapsulation of the non-native substrate proteins and provides a physical environment optimized to promote and accelerate protein folding. The polypeptide is Chaperonin GroEL 4 (Bradyrhizobium sp. (strain BTAi1 / ATCC BAA-1182)).